The primary structure comprises 263 residues: MGGEGGADDSVVHFVFVHGASHGAWCWYKLTTLLVAAGFKATSVDLTGAGINLTDSNTVFDFDHYNRPLFSLLSDLPSHHKIVLVGHSIGGGSVTEALCKFTDKISMVVYLAADMVQPGSTSSTHDSIMTVGEEDIWEYIYGEGADKPPTGVLMKEEFRRHYYYSQSPLEDVSLASKLLRPAPVRALGGADKLSPNPEAEKVPRVYIKTAKDNLFDPLRQDRLVEKWPPSQLYILEESDHSAFFSVPTTLFAYLLRAVSFLQL.

One can recognise an AB hydrolase-1 domain in the interval 13-244 (HFVFVHGASH…LEESDHSAFF (232 aa)). The Acyl-ester intermediate role is filled by S88. Residues D212 and H240 each act as charge relay system in the active site.

This sequence belongs to the AB hydrolase superfamily. As to quaternary structure, homodimer.

The protein localises to the cytoplasm. It catalyses the reaction pheophorbide a + H2O + H(+) = pyropheophorbide a + methanol + CO2. Inhibited by methanol and phenylmethylsulfonicfluoride (PMSF). Functionally, involved in chlorophyll degradation. Specific for the pheophorbides of the dihydroporphyrin and tetrahydroporphyrin types. Chlorophyllide a, pheophytin a and the nonfluorescent chlorophyll catabolite (NCC) are not used as substrates. The chain is Pheophorbidase (PPD) from Raphanus sativus (Radish).